Consider the following 1214-residue polypeptide: Reverse gyrase (1214 aa).

The segment at 1 to 37 (MKAIYRDMCPNCRGAITDERLAAKNPCDACLDEPISM) adopts an RG N-terminal-type zinc-finger fold. The Zn(2+) site is built by Cys9, Cys12, Cys27, and Cys30. ATP contacts are provided by residues Gln89 and 106 to 113 (APTGMGKS). The Helicase ATP-binding domain occupies 93 to 252 (VKRIIKGKSF…WEIIKLKKQL (160 aa)). Residues 213–216 (DDVD) carry the DEAD box motif. Residues 635 to 1214 (DLVKSALMIV…YEEILRYVKS (580 aa)) are topoisomerase I. The Toprim domain occupies 639 to 802 (SALMIVESPN…VIKRIEFHEV (164 aa)). Glu645 contacts Mg(2+). Residues 719 to 748 (IKRCRDCGHQFVDWEEKGVCPRCGSRNVYD) form an RG C-terminal-type zinc finger. Zn(2+) contacts are provided by Cys722, Cys725, Cys738, and Cys741. Asp771 is a Mg(2+) binding site. One can recognise a Topo IA-type catalytic domain in the interval 818 to 1212 (NEDRVNAQLV…ELYEEILRYV (395 aa)). Tyr955 functions as the O-(5'-phospho-DNA)-tyrosine intermediate in the catalytic mechanism.

It in the N-terminal section; belongs to the DEAD box helicase family. DDVD subfamily. In the C-terminal section; belongs to the type IA topoisomerase family. In terms of assembly, monomer. The cofactor is Zn(2+). Mg(2+) is required as a cofactor.

Its subcellular location is the cytoplasm. It catalyses the reaction ATP + H2O = ADP + phosphate + H(+). Its function is as follows. Modifies the topological state of DNA by introducing positive supercoils in an ATP-dependent process. Increases the linking number in steps of +1. Binds to single-stranded DNA, transiently cleaves and then rejoins the ends, introducing a positive supercoil in the process. The scissile phosphodiester is attacked by the catalytic tyrosine of the enzyme, resulting in the formation of a DNA-(5'-phosphotyrosyl)-enzyme intermediate. Probably involved in rewinding DNA strands in regions of the chromosome that have opened up to allow replication, transcription, DNA repair and/or for DNA protection. This is Reverse gyrase from Pyrococcus furiosus (strain ATCC 43587 / DSM 3638 / JCM 8422 / Vc1).